Reading from the N-terminus, the 252-residue chain is NAD(P)H-quinone oxidoreductase subunit K (252 aa).

Residues C73, C74, C138, and C169 each contribute to the [4Fe-4S] cluster site. Over residues A225–Q236 the composition is skewed to polar residues. Positions A225 to Q252 are disordered.

Belongs to the complex I 20 kDa subunit family. NDH-1 can be composed of about 15 different subunits; different subcomplexes with different compositions have been identified which probably have different functions. The cofactor is [4Fe-4S] cluster.

It is found in the cellular thylakoid membrane. It carries out the reaction a plastoquinone + NADH + (n+1) H(+)(in) = a plastoquinol + NAD(+) + n H(+)(out). The enzyme catalyses a plastoquinone + NADPH + (n+1) H(+)(in) = a plastoquinol + NADP(+) + n H(+)(out). Its function is as follows. NDH-1 shuttles electrons from an unknown electron donor, via FMN and iron-sulfur (Fe-S) centers, to quinones in the respiratory and/or the photosynthetic chain. The immediate electron acceptor for the enzyme in this species is believed to be plastoquinone. Couples the redox reaction to proton translocation, and thus conserves the redox energy in a proton gradient. Cyanobacterial NDH-1 also plays a role in inorganic carbon-concentration. The sequence is that of NAD(P)H-quinone oxidoreductase subunit K from Prochlorococcus marinus (strain MIT 9211).